Here is a 361-residue protein sequence, read N- to C-terminus: Phospho-N-acetylmuramoyl-pentapeptide-transferase (361 aa).

Helical transmembrane passes span 28 to 48, 74 to 94, 99 to 119, 133 to 153, 168 to 188, 203 to 223, 236 to 256, 263 to 283, 288 to 308, and 338 to 358; these read LAII…IKFL, TMGG…LADL, IWIT…DDYA, SKLL…EYLD, LSLD…VGSS, VPIA…GNLI, TGEL…FLWF, VFMG…ISVI, IVLA…ILQV, and KVVI…LSSL.

The protein belongs to the glycosyltransferase 4 family. MraY subfamily. Mg(2+) serves as cofactor.

Its subcellular location is the cell inner membrane. It catalyses the reaction UDP-N-acetyl-alpha-D-muramoyl-L-alanyl-gamma-D-glutamyl-meso-2,6-diaminopimeloyl-D-alanyl-D-alanine + di-trans,octa-cis-undecaprenyl phosphate = di-trans,octa-cis-undecaprenyl diphospho-N-acetyl-alpha-D-muramoyl-L-alanyl-D-glutamyl-meso-2,6-diaminopimeloyl-D-alanyl-D-alanine + UMP. Its pathway is cell wall biogenesis; peptidoglycan biosynthesis. Catalyzes the initial step of the lipid cycle reactions in the biosynthesis of the cell wall peptidoglycan: transfers peptidoglycan precursor phospho-MurNAc-pentapeptide from UDP-MurNAc-pentapeptide onto the lipid carrier undecaprenyl phosphate, yielding undecaprenyl-pyrophosphoryl-MurNAc-pentapeptide, known as lipid I. In Rickettsia felis (strain ATCC VR-1525 / URRWXCal2) (Rickettsia azadi), this protein is Phospho-N-acetylmuramoyl-pentapeptide-transferase.